A 150-amino-acid chain; its full sequence is SsrA-binding protein (150 aa).

It belongs to the SmpB family.

It localises to the cytoplasm. Functionally, required for rescue of stalled ribosomes mediated by trans-translation. Binds to transfer-messenger RNA (tmRNA), required for stable association of tmRNA with ribosomes. tmRNA and SmpB together mimic tRNA shape, replacing the anticodon stem-loop with SmpB. tmRNA is encoded by the ssrA gene; the 2 termini fold to resemble tRNA(Ala) and it encodes a 'tag peptide', a short internal open reading frame. During trans-translation Ala-aminoacylated tmRNA acts like a tRNA, entering the A-site of stalled ribosomes, displacing the stalled mRNA. The ribosome then switches to translate the ORF on the tmRNA; the nascent peptide is terminated with the 'tag peptide' encoded by the tmRNA and targeted for degradation. The ribosome is freed to recommence translation, which seems to be the essential function of trans-translation. The sequence is that of SsrA-binding protein from Polynucleobacter asymbioticus (strain DSM 18221 / CIP 109841 / QLW-P1DMWA-1) (Polynucleobacter necessarius subsp. asymbioticus).